The sequence spans 151 residues: Ribonuclease H (151 aa).

The RNase H type-1 domain maps to 1–146; that stretch reads MSDLFAYTDG…ADELARAGMA (146 aa). Residues D9, E52, D74, and D138 each contribute to the Mg(2+) site.

It belongs to the RNase H family. In terms of assembly, monomer. Mg(2+) serves as cofactor.

Its subcellular location is the cytoplasm. It catalyses the reaction Endonucleolytic cleavage to 5'-phosphomonoester.. Its function is as follows. Endonuclease that specifically degrades the RNA of RNA-DNA hybrids. The chain is Ribonuclease H from Cereibacter sphaeroides (strain ATCC 17025 / ATH 2.4.3) (Rhodobacter sphaeroides).